Here is a 297-residue protein sequence, read N- to C-terminus: N-acetylneuraminate lyase (297 aa).

Residues serine 47 and threonine 48 each contribute to the aceneuramate site. Tyrosine 137 acts as the Proton donor in catalysis. Catalysis depends on lysine 165, which acts as the Schiff-base intermediate with substrate. Positions 167, 189, 191, 192, and 208 each coordinate aceneuramate.

This sequence belongs to the DapA family. NanA subfamily. Homotetramer.

Its subcellular location is the cytoplasm. The enzyme catalyses aceneuramate = aldehydo-N-acetyl-D-mannosamine + pyruvate. Its pathway is amino-sugar metabolism; N-acetylneuraminate degradation; D-fructose 6-phosphate from N-acetylneuraminate: step 1/5. Functionally, catalyzes the reversible aldol cleavage of N-acetylneuraminic acid (sialic acid; Neu5Ac) to form pyruvate and N-acetylmannosamine (ManNAc) via a Schiff base intermediate. In Salmonella agona (strain SL483), this protein is N-acetylneuraminate lyase.